A 224-amino-acid chain; its full sequence is Ribonuclease HII (224 aa).

One can recognise an RNase H type-2 domain in the interval 1-210 (MKLGGIDEAG…LKKIEEKLQK (210 aa)). Residues Asp-7, Glu-8, and Asp-105 each coordinate a divalent metal cation.

The protein belongs to the RNase HII family. The cofactor is Mn(2+). Mg(2+) serves as cofactor.

The protein resides in the cytoplasm. It catalyses the reaction Endonucleolytic cleavage to 5'-phosphomonoester.. Functionally, endonuclease that specifically degrades the RNA of RNA-DNA hybrids. The chain is Ribonuclease HII from Thermococcus sibiricus (strain DSM 12597 / MM 739).